Reading from the N-terminus, the 173-residue chain is Insertion element IS1397 uncharacterized 20.1 kDa protein (173 aa).

Residues 115 to 135 (KSMTRSDDTHENEANMTPEEM) are disordered.

The protein belongs to the IS150/IS1296 orfA family.

The polypeptide is Insertion element IS1397 uncharacterized 20.1 kDa protein (Escherichia coli).